A 360-amino-acid chain; its full sequence is Aminomethyltransferase (360 aa).

This sequence belongs to the GcvT family. As to quaternary structure, the glycine cleavage system is composed of four proteins: P, T, L and H.

It carries out the reaction N(6)-[(R)-S(8)-aminomethyldihydrolipoyl]-L-lysyl-[protein] + (6S)-5,6,7,8-tetrahydrofolate = N(6)-[(R)-dihydrolipoyl]-L-lysyl-[protein] + (6R)-5,10-methylene-5,6,7,8-tetrahydrofolate + NH4(+). Its function is as follows. The glycine cleavage system catalyzes the degradation of glycine. The polypeptide is Aminomethyltransferase (Pseudoalteromonas translucida (strain TAC 125)).